The chain runs to 261 residues: X-box-binding protein 1 (261 aa).

At 1-185 the chain is on the cytoplasmic side; sequence MVVVAPAQSP…VQAQLSPLQN (185 aa). Positions 27–37 are enriched in low complexity; sequence TGGAPAGRALP. Residues 27–65 form a disordered region; it reads TGGAPAGRALPVMVPGQQGASPEGASGVPPQARKRQRLT. 2 positions are modified to phosphoserine: S47 and S68. The bZIP domain maps to 70 to 133; it reads EEKALRRKLK…HGLVVENQEL (64 aa). A basic motif region spans residues 72 to 94; that stretch reads KALRRKLKNRVAAQTARDRKKAR. Residues 76–92 form a nuclear localization signal (NLS) region; the sequence is RKLKNRVAAQTARDRKK. The segment at 98–133 is leucine-zipper; that stretch reads LEQQVVDLEEENQKLLLENQLLREKTHGLVVENQEL. Residues 186–203 traverse the membrane as a helical; Signal-anchor for type II membrane protein segment; the sequence is ISPWTLMALTLQTLSLTS. The Lumenal portion of the chain corresponds to 204-261; that stretch reads CWAFCSTWTQSCSSDVLPQSLPAWSSSQKWTQKDPVPYRPPLLHPWGRHQPSWKPLMN.

Belongs to the bZIP family. Isoform 1 interacts with HM13. Isoform 1 interacts with RNF139; the interaction induces ubiquitination and degradation of isoform 1. Isoform 1 interacts (via luminal domain) with DERL1; the interaction obviates the need for ectodomain shedding prior HM13/SPP-mediated XBP1 isoform 1 cleavage. Isoform 1 interacts with HDAC3 and AKT1; the interactions occur in endothelial cell (EC) under disturbed flow. Isoform 1 interacts with the oncoprotein FOS. Interacts with SIRT1. In terms of processing, isoform 1 is ubiquitinated, leading to proteasome-mediated degradation in response to ER stress. X-box-binding protein 1, cytoplasmic form and luminal form are produced by intramembrane proteolytic cleavage of ER membrane-anchored isoform 1 triggered by HM13/SPP in a DERL1-RNF139-dependent and VCP/p97-independent manner. X-box-binding protein 1, luminal form is ubiquitinated leading to proteasomal degradation. Post-translationally, acetylated by EP300; acetylation positively regulates the transcriptional activity of XBP1. Deacetylated by SIRT1; deacetylation negatively regulates the transcriptional activity of XBP1.

Its subcellular location is the nucleus. It localises to the endoplasmic reticulum. The protein resides in the cytoplasm. The protein localises to the endoplasmic reticulum membrane. It is found in the membrane. Functions as a transcription factor during endoplasmic reticulum (ER) stress by regulating the unfolded protein response (UPR). Required for cardiac myogenesis and hepatogenesis during embryonic development, and the development of secretory tissues such as exocrine pancreas and salivary gland. Involved in terminal differentiation of B lymphocytes to plasma cells and production of immunoglobulins. Modulates the cellular response to ER stress in a PIK3R-dependent manner. Binds to the cis-acting X box present in the promoter regions of major histocompatibility complex class II genes. Involved in VEGF-induced endothelial cell (EC) proliferation and retinal blood vessel formation during embryonic development but also for angiogenesis in adult tissues under ischemic conditions. Functions also as a major regulator of the UPR in obesity-induced insulin resistance and type 2 diabetes for the management of obesity and diabetes prevention. Its function is as follows. Acts as a weak transcriptional factor. Together with HDAC3, contributes to the activation of NFE2L2-mediated HMOX1 transcription factor gene expression in a PI(3)K/mTORC2/Akt-dependent signaling pathway leading to EC survival under disturbed flow/oxidative stress. Binds to the ER stress response element (ERSE) upon ER stress. Binds to the consensus 5'-GATGACGTG[TG]N(3)[AT]T-3' sequence related to cAMP responsive element (CRE)-like sequences. Associates preferentially to the HDAC3 gene promoter region in a static flow-dependent manner. Binds to the CDH5/VE-cadherin gene promoter region. This Bos taurus (Bovine) protein is X-box-binding protein 1.